We begin with the raw amino-acid sequence, 97 residues long: Large ribosomal subunit protein eL21 (97 aa).

Residues 1–26 form a disordered region; the sequence is MQKSEGFRSKTRYKLQKHPRQKGMAP. The segment covering 9–21 has biased composition (basic residues); the sequence is SKTRYKLQKHPRQ.

This sequence belongs to the eukaryotic ribosomal protein eL21 family.

The chain is Large ribosomal subunit protein eL21 from Methanococcus maripaludis (strain C5 / ATCC BAA-1333).